A 221-amino-acid polypeptide reads, in one-letter code: Ribosomal RNA small subunit methyltransferase Nep1 (221 aa).

Residues glycine 174, glycine 179, and 196–201 each bind S-adenosyl-L-methionine; that span reads IGNVSL.

The protein belongs to the class IV-like SAM-binding methyltransferase superfamily. RNA methyltransferase NEP1 family. Homodimer.

It carries out the reaction a pseudouridine in rRNA + S-adenosyl-L-methionine = an N(1)-methylpseudouridine in rRNA + S-adenosyl-L-homocysteine + H(+). Its function is as follows. Methyltransferase involved in ribosomal biogenesis. Specifically catalyzes the N1-methylation of the pseudouridine corresponding to position 914 in M.jannaschii 16S rRNA. This chain is Ribosomal RNA small subunit methyltransferase Nep1, found in Pyrobaculum calidifontis (strain DSM 21063 / JCM 11548 / VA1).